The following is a 216-amino-acid chain: Ribosomal RNA large subunit methyltransferase E (216 aa).

Residues glycine 67, tryptophan 69, aspartate 87, aspartate 103, and aspartate 128 each coordinate S-adenosyl-L-methionine. The active-site Proton acceptor is the lysine 168.

The protein belongs to the class I-like SAM-binding methyltransferase superfamily. RNA methyltransferase RlmE family.

It localises to the cytoplasm. It carries out the reaction uridine(2552) in 23S rRNA + S-adenosyl-L-methionine = 2'-O-methyluridine(2552) in 23S rRNA + S-adenosyl-L-homocysteine + H(+). In terms of biological role, specifically methylates the uridine in position 2552 of 23S rRNA at the 2'-O position of the ribose in the fully assembled 50S ribosomal subunit. The sequence is that of Ribosomal RNA large subunit methyltransferase E from Acinetobacter baumannii (strain AB307-0294).